The chain runs to 285 residues: Phosphatidylserine decarboxylase proenzyme (285 aa).

Active-site charge relay system; for autoendoproteolytic cleavage activity residues include Asp89, His146, and Ser252. The active-site Schiff-base intermediate with substrate; via pyruvic acid; for decarboxylase activity is Ser252. Position 252 is a pyruvic acid (Ser); by autocatalysis (Ser252).

The protein belongs to the phosphatidylserine decarboxylase family. PSD-B subfamily. Prokaryotic type I sub-subfamily. In terms of assembly, heterodimer of a large membrane-associated beta subunit and a small pyruvoyl-containing alpha subunit. Pyruvate serves as cofactor. In terms of processing, is synthesized initially as an inactive proenzyme. Formation of the active enzyme involves a self-maturation process in which the active site pyruvoyl group is generated from an internal serine residue via an autocatalytic post-translational modification. Two non-identical subunits are generated from the proenzyme in this reaction, and the pyruvate is formed at the N-terminus of the alpha chain, which is derived from the carboxyl end of the proenzyme. The autoendoproteolytic cleavage occurs by a canonical serine protease mechanism, in which the side chain hydroxyl group of the serine supplies its oxygen atom to form the C-terminus of the beta chain, while the remainder of the serine residue undergoes an oxidative deamination to produce ammonia and the pyruvoyl prosthetic group on the alpha chain. During this reaction, the Ser that is part of the protease active site of the proenzyme becomes the pyruvoyl prosthetic group, which constitutes an essential element of the active site of the mature decarboxylase.

The protein localises to the cell membrane. It catalyses the reaction a 1,2-diacyl-sn-glycero-3-phospho-L-serine + H(+) = a 1,2-diacyl-sn-glycero-3-phosphoethanolamine + CO2. Its pathway is phospholipid metabolism; phosphatidylethanolamine biosynthesis; phosphatidylethanolamine from CDP-diacylglycerol: step 2/2. Catalyzes the formation of phosphatidylethanolamine (PtdEtn) from phosphatidylserine (PtdSer). This is Phosphatidylserine decarboxylase proenzyme from Vibrio parahaemolyticus serotype O3:K6 (strain RIMD 2210633).